Here is a 302-residue protein sequence, read N- to C-terminus: Endochitinase 4 (302 aa).

Residues Glu-1–Ala-18 form the signal peptide. The region spanning Glu-19 to Ser-60 is the Chitin-binding type-1 domain. Disulfide bonds link Cys-21-Cys-36, Cys-30-Cys-42, Cys-35-Cys-49, and Cys-54-Cys-58. The interval Pro-59–Gly-79 is disordered. Residues Gly-61–Gly-72 show a composition bias toward pro residues. The active-site Proton donor is the Glu-144. Cys-162 and Cys-182 are oxidised to a cystine.

The protein belongs to the glycosyl hydrolase 19 family. Chitinase class I subfamily.

It is found in the vacuole. It carries out the reaction Random endo-hydrolysis of N-acetyl-beta-D-glucosaminide (1-&gt;4)-beta-linkages in chitin and chitodextrins.. Its function is as follows. Defense against chitin-containing fungal pathogens. The protein is Endochitinase 4 (CHTB4) of Solanum tuberosum (Potato).